Reading from the N-terminus, the 418-residue chain is Sialidase-3 (418 aa).

The FRIP motif signature appears at 24–27; it reads YRIP. Arg-25 and Arg-45 together coordinate substrate. Catalysis depends on Asp-50, which acts as the Proton acceptor. The stretch at 129–140 is one BNR 1 repeat; sequence LYSEDSGCSWGE. Tyr-179 and Tyr-181 together coordinate substrate. The stretch at 201 to 212 is one BNR 2 repeat; the sequence is FYSDDLGVTWHC. Residues Glu-223 and Arg-243 each contribute to the substrate site. A BNR 3 repeat occupies 252–263; that stretch reads AFSTDSGDCFQK. Residue Arg-339 coordinates substrate. Tyr-369 acts as the Nucleophile in catalysis. Residue Glu-386 is part of the active site.

This sequence belongs to the glycosyl hydrolase 33 family. Interacts with CAV1; this interaction enhances NEU3 sialidase activity within caveola. Interacts with EGFR; this interaction mediates desialylation of EGFR enhancing downstream signaling. Post-translationally, palmitoylated; may regulate intracellular trafficking and anchorage to plasma membrane and endomembranes. As to expression, expressed in brain, cardiac muscle and weakly in liver.

It localises to the cell membrane. The protein resides in the membrane. The protein localises to the caveola. It is found in the early endosome membrane. Its subcellular location is the recycling endosome membrane. It localises to the lysosome membrane. The enzyme catalyses Hydrolysis of alpha-(2-&gt;3)-, alpha-(2-&gt;6)-, alpha-(2-&gt;8)- glycosidic linkages of terminal sialic acid residues in oligosaccharides, glycoproteins, glycolipids, colominic acid and synthetic substrates.. It catalyses the reaction a ganglioside GD1a + H2O = a ganglioside GM1 + N-acetylneuraminate. It carries out the reaction a ganglioside GD1a (d18:1(4E)) + H2O = a ganglioside GM1 (d18:1(4E)) + N-acetylneuraminate. The catalysed reaction is a ganglioside GD1b + H2O = a ganglioside GM1 + N-acetylneuraminate. The enzyme catalyses a ganglioside GD1b (d18:1(4E)) + H2O = a ganglioside GM1 (d18:1(4E)) + N-acetylneuraminate. It catalyses the reaction a ganglioside GD3 + H2O = a ganglioside GM3 + N-acetylneuraminate. It carries out the reaction a ganglioside GD3 (d18:1(4E)) + H2O = a ganglioside GM3 (d18:1(4E)) + N-acetylneuraminate. The catalysed reaction is a ganglioside GM3 + H2O = a beta-D-galactosyl-(1-&gt;4)-beta-D-glucosyl-(1&lt;-&gt;1)-ceramide + N-acetylneuraminate. The enzyme catalyses a ganglioside GM1 + H2O = a ganglioside GA1 + N-acetylneuraminate. It catalyses the reaction a ganglioside GM1 (d18:1(4E)) + H2O = a ganglioside GA1 (d18:1(4E)) + N-acetylneuraminate. It carries out the reaction a ganglioside GM2 (d18:1(4E)) + H2O = a ganglioside GA2 (d18:1(4E)) + N-acetylneuraminate. The catalysed reaction is a ganglioside GM3 (d18:1(4E)) + H2O = a beta-D-Gal-(1-&gt;4)-beta-D-Glc-(1&lt;-&gt;1)-Cer(d18:1(4E)) + N-acetylneuraminate. The enzyme catalyses a ganglioside GT1b + H2O = a ganglioside GD1b + N-acetylneuraminate. Exo-alpha-sialidase that catalyzes the hydrolytic cleavage of the terminal sialic acid (N-acetylneuraminic acid, Neu5Ac) of a glycan moiety in the catabolism of glycolipids, glycoproteins and oligosacharides. Displays high catalytic efficiency for gangliosides including alpha-(2-&gt;3)-sialylated GD1a and GM3 and alpha-(2-&gt;8)-sialylated GD3. Plays a role in the regulation of transmembrane signaling through the modulation of ganglioside content of the lipid bilayer and by direct interaction with signaling receptors, such as EGFR. Desialylates EGFR and activates downstream signaling in proliferating cells. Contributes to clathrin-mediated endocytosis by regulating sorting of endocytosed receptors to early and recycling endosomes. The chain is Sialidase-3 (Neu3) from Rattus norvegicus (Rat).